A 381-amino-acid polypeptide reads, in one-letter code: EDCLYLNIYAPAHAETGSKLPVMVWFPGGAFETGSASIFDGSALASYENVLVVTIQYRLGIFGFFNTGDEHARGNWAFMDQVAALVWVQENIEFFGGDPRCVTIFGESAGAISVSSLILSPMTKGLFHKAIMASGVAIIPYLKASDYERNDDLQTIASICDCNASDSVALLQCLRAKSSEELLSISQKTKSFTRVVDGLFFPNELLDLLAQKLFHLVPSIIGVNNHECGFLLPMKEFPEILGGSNKSLALQLIHSVLHIPVQYSYLVADEYFHNKHSLLDIRNRFLDLLGDVFFVVPGLVTAQYHTDAGAPVYFYEFQHRPQCLKDRKPPFVKADHTDEIRFVFGGAFLKGNIVMFEEATEEEKALSRKMMRYWANFARTG.

The active-site Acyl-ester intermediate is S108. Cysteines 162 and 173 form a disulfide. N-linked (GlcNAc...) asparagine glycosylation occurs at N163. E227 acts as the Charge relay system in catalysis. N-linked (GlcNAc...) asparagine glycosylation occurs at N245. H336 (charge relay system) is an active-site residue.

Belongs to the type-B carboxylesterase/lipase family. Component of a epididymal complex at least composed of soluble form of prion protein PRNP, CLU, BPI, CES5A, MANBA and GLB1. In terms of processing, N-glycosylated. Detected in corpus and cauda epididymal fluid. Present in seminal fluid but not found to be associated with sperm (at protein level). Not expressed in other tissues.

It is found in the secreted. The catalysed reaction is a carboxylic ester + H2O = an alcohol + a carboxylate + H(+). Its function is as follows. Involved in the detoxification of xenobiotics and in the activation of ester and amide prodrugs. This Ovis aries (Sheep) protein is Carboxylesterase 5A (CES5A).